The sequence spans 269 residues: Shikimate dehydrogenase (NADP(+)) (269 aa).

Residues 17-19 and threonine 64 each bind shikimate; that span reads SKS. The active-site Proton acceptor is lysine 68. Aspartate 80 serves as a coordination point for NADP(+). Shikimate is bound by residues asparagine 89 and aspartate 105. Residues 130 to 134, 154 to 159, and methionine 213 each bind NADP(+); these read GAGGA and NRTRAK. Tyrosine 215 provides a ligand contact to shikimate. Glycine 237 contacts NADP(+).

This sequence belongs to the shikimate dehydrogenase family. Homodimer.

It carries out the reaction shikimate + NADP(+) = 3-dehydroshikimate + NADPH + H(+). It participates in metabolic intermediate biosynthesis; chorismate biosynthesis; chorismate from D-erythrose 4-phosphate and phosphoenolpyruvate: step 4/7. Involved in the biosynthesis of the chorismate, which leads to the biosynthesis of aromatic amino acids. Catalyzes the reversible NADPH linked reduction of 3-dehydroshikimate (DHSA) to yield shikimate (SA). In Neisseria gonorrhoeae (strain ATCC 700825 / FA 1090), this protein is Shikimate dehydrogenase (NADP(+)).